The chain runs to 370 residues: MSEHREAVRTARSVVVKIGTTALTTPSGVFDANRLASLVEAIEGRMKAGSDVVIVSSGAIAAGIEPLGLSKRPTDLATKQAAASVGQVALVNAWSAAFAVYNRTVGQVLLTAHDISMRVQHNNAQRTLDRLRALHAVAIVNENDTVATNEIRFGDNDRLSALVAHLVGADALILLSDIDGLYDGDPRKATPDKPARFIPEVAAQGDLDGVVAGRGSSLGTGGMASKLSSALLAADAGVPVLLAAAADAGRALDDASVGTVFAPRPERMSARKFWMRYAAESAGALTLDDGAVRAVIKQRRSLLPAGITSVTGRFHGGDVVDLRALDGHTVARGVVAYDQAELASIIGRSTHELPVEMRRPAVHADDLVRT.

Lysine 17 contacts ATP. Positions 57, 144, and 156 each coordinate substrate. Residues 176 to 177 (SD) and 220 to 226 (TGGMASK) each bind ATP. In terms of domain architecture, PUA spans 282 to 360 (AGALTLDDGA…HELPVEMRRP (79 aa)).

Belongs to the glutamate 5-kinase family.

Its subcellular location is the cytoplasm. It carries out the reaction L-glutamate + ATP = L-glutamyl 5-phosphate + ADP. The protein operates within amino-acid biosynthesis; L-proline biosynthesis; L-glutamate 5-semialdehyde from L-glutamate: step 1/2. In terms of biological role, catalyzes the transfer of a phosphate group to glutamate to form L-glutamate 5-phosphate. The sequence is that of Glutamate 5-kinase from Mycolicibacterium smegmatis (strain ATCC 700084 / mc(2)155) (Mycobacterium smegmatis).